We begin with the raw amino-acid sequence, 1941 residues long: MKNIIKYLFIFLCFLIITEATHFRYGTISWAPTTKYNNIKITVNLAFRTGYWGSVAIGQQISHGNIDFGDNTKTGLTMTVTSKDTDNEWFTATWSGIHEYSPQPTAQTKNYIVVYKDCCRISTLLNNGDQYWHISAGIQIDSSNAFPNVNWSPVTNMMPIVRVIANKNNNFRIIANDQNKQTALSYKFTDTWTMDQPPGMTVDSINGNCWFLPTKEGLYSTQIKVTDALGAYVVVDFLLQTYTEVGKCDPTCSNADASCTSNSQCTKCSNTGSNSINTCTNIQSPPEFIIPTPKNGETILFPIDKSSEFYLSCKTPYASRTASITTSSIPTELALTTTSTGQTNSIKYSWSPKTSSIGSYVISALCKDSSGLTSEVRSFTIRIEKPECGNGGIKGGDGKCVCIGNWDTIYQCFECKDGFYGDKCTVLPPCKNGVPNGGVNGDGKCLCNNGWTGSDCSVSNSQSCGSMTSSILSSSNAVSSYLNPIKAQVYLANDKKFDFPLVLSIPSTLSKLDVYLLVDANMNSAATFLNIYNGMDNFISSVKKFAEDTQFGLGIFSDYPSNSITFQPNSNIGSDISSAIREFKPSSYSSSSNGNSLLAATQASSAQVGWNSGSFKVIVIITDIDYQANPTEKSSFTNSLIDKSVVPVVIGFGSPIPNWGASISSNGFGYTVQSAITSGDWSTKAAAGIKAVSSKLVYKSGEMANGKSLVTSLPIGETITQSTQKTVTISLLKPATTNIESPVAKVSVMGYGQTVISINSNRQPTVSNSGFSVDQNSFATFKLTGSDADLNILTFKFTSFLDSTAGIITSSSGVDVSTQTNTFYSSTEVFKFTPKKNYIATSSISFIANDGCVDSTAATITITINRINQAPECQPITINALLNQQVGISLSASDFEDVASKIAIFVSNPSPLTVYGSFNYQDKPITTTTTINNPWQLTFKQIVNPPSAISVGVPFKSRDSASLYSKECLITVNFVHTNEAPISSSLSPVPVNPRDKTTITLTSTDYDSTSATFNIKSFTTGTDGKGTFYICPQLGDCSCTTTQIKLQKNYVSSAVSYSTNIANLGICFSNDQSSQITDYASVTFTSTDNQGLESLPVTVNINVVGTRPNSPPTIISIPKYSVFQDYKDYDKSSKIIDGTDTDQDDYDKSQGVNNLIAVITEKPKKGTLYLKNDGSVASNSPAPMEIYYVPNPGTFGDDTYSYKVIDTLQASSTIATTTVSVIQINHKPSVSADSYSFTSQDVQFEKSLVTSDFDGDQVNCQVIALPNQISMYDSEGILITQVPAKLSKNSYSFRLLDPSLIIPSPFSNVQSQFTVNCLDVTSKTDPFGPLQSDDLIVNVGYIYINTPPKTKTLTVQLDQDTSKAFTFNGDDIETPTSDLKVKIFSLPTNGRLSNQYGYLNGTSISSRTYYLNELTYTPNAGLSNWDTEDNNSPLDKISYAVLDKGGLSSETDLVYFSVRPRNPPIYTGKDEINVLQNTRYPLTIIGEIGNGGSSVAISVVSFTGNGTLYETFNMGSEGTIDRQISSYPVNRSDSLVGSYFYAYKPPHNQYGDDFDTITFVLIDGDLVSKIYTVTVNVIHVNQPPTIKLISYKVLGGSGKEIEFGSNSTVNMNINTMALVKYIGNDIDKDQVGPLGSKVLNIPLTGTIYKFNNETTPLGAIIKDKNLNIERNDDGFYYFVFVPIKGSTGQGYARVPLIVIDDGGLVSPSESVDFNVNNINIPPVITIDKEKRSYSLLTNLTISATKITFDDPDSKNNDVSITISIVGEKDETVVPFSNVSFTVTTGKATCKPDSTLSSITCVGKKSELNKVISKIDIIAKVAGNYRLKVFVDDLGYNSPISIRSSTHLNATDYVTLQISSPEVTTQNSSNKTVLSGAIAGAAAGTALIAAAMWKMLRKAAPPTDAFFDEGAFLGDGVNSNPMYQESKNGGENPLYLASNETL.

Residues Met-1–Ala-20 form the signal peptide. Residues Thr-21–Thr-1871 are Extracellular-facing. Residues Tyr-420 to Ser-457 enclose the EGF-like domain. Cystine bridges form between Cys-430-Cys-445 and Cys-447-Cys-456. The VWFA domain occupies Asp-513–Leu-696. Asn-1400, Asn-1505, Asn-1530, Asn-1606, Asn-1652, Asn-1738, Asn-1777, Asn-1848, Asn-1866, and Asn-1869 each carry an N-linked (GlcNAc...) asparagine glycan. A helical membrane pass occupies residues Val-1872–Trp-1892. Topologically, residues Lys-1893–Leu-1941 are cytoplasmic. Residues Met-1921–Leu-1941 form a disordered region.

This sequence belongs to the SIB family. As to quaternary structure, interacts with talA/talin.

It is found in the membrane. Implicated in cellular adhesion. The polypeptide is Integrin beta-like protein B (sibB) (Dictyostelium discoideum (Social amoeba)).